The primary structure comprises 107 residues: Large ribosomal subunit protein P2 (107 aa).

Low complexity predominate over residues 63 to 83 (SSVPSGGSAPAAAAPSGGAAP). The interval 63–107 (SSVPSGGSAPAAAAPSGGAAPKAEEKKKEEPKEESDDDMGFGLFD) is disordered. Residues 84–93 (KAEEKKKEEP) show a composition bias toward basic and acidic residues.

The protein belongs to the eukaryotic ribosomal protein P1/P2 family. As to quaternary structure, P1 and P2 exist as dimers at the large ribosomal subunit. Phosphorylated.

Plays an important role in the elongation step of protein synthesis. The chain is Large ribosomal subunit protein P2 from Caenorhabditis elegans.